Consider the following 1124-residue polypeptide: Angiopoietin-1 receptor (1124 aa).

An N-terminal signal peptide occupies residues 1–22 (MDSLASLVLCGVSLLLSGTVEG). Over 23-748 (AMDLILINSL…ADLGGGKMLL (726 aa)) the chain is Extracellular. A disulfide bond links Cys-44 and Cys-102. The 80-residue stretch at 44 to 123 (CIASGWRPHE…RTMKMRQQAS (80 aa)) folds into the Ig-like C2-type 1 domain. N-linked (GlcNAc...) asparagine glycosylation is found at Asn-140 and Asn-158. 3 EGF-like domains span residues 210–252 (RCEA…RTCE), 254–299 (ACEL…LQCN), and 301–341 (ACHP…LQCE). 13 cysteine pairs are disulfide-bonded: Cys-211/Cys-220, Cys-224/Cys-233, Cys-227/Cys-240, Cys-242/Cys-251, Cys-255/Cys-264, Cys-268/Cys-274, Cys-280/Cys-287, Cys-289/Cys-298, Cys-302/Cys-311, Cys-315/Cys-323, Cys-317/Cys-329, Cys-331/Cys-340, and Cys-370/Cys-424. One can recognise an Ig-like C2-type 2 domain in the interval 350 to 440 (PKIVDLPDHI…GMVEKPFNIS (91 aa)). N-linked (GlcNAc...) asparagine glycans are attached at residues Asn-399, Asn-438, Asn-464, Asn-560, Asn-596, Asn-649, and Asn-691. Fibronectin type-III domains follow at residues 447–541 (PLNA…TASI), 545–636 (PPRG…TLSD), and 641–735 (QPEN…LPES). Residues 749–769 (IAILGSAGMTCLTVLLAFLII) form a helical membrane-spanning segment. Topologically, residues 770-1124 (LQLKRANVQR…GIDCSAEEAA (355 aa)) are cytoplasmic. Positions 824 to 1096 (IKFQDVIGEG…QILVSLNRML (273 aa)) constitute a Protein kinase domain. ATP contacts are provided by residues 830–838 (IGEGNFGQV) and Lys-855. Tyr-860 carries the phosphotyrosine; by autocatalysis modification. Catalysis depends on Asp-964, which acts as the Proton acceptor. Residues Tyr-992, Tyr-1102, and Tyr-1108 each carry the phosphotyrosine; by autocatalysis modification.

It belongs to the protein kinase superfamily. Tyr protein kinase family. Tie subfamily. Homodimer. Heterodimer with TIE1. Interacts with ANGPT1, ANGPT2 and ANGPT4. At cell-cell contacts in quiescent cells, forms a signaling complex composed of ANGPT1 plus TEK molecules from two adjoining cells. In the absence of endothelial cell-cell contacts, interaction with ANGPT1 mediates contacts with the extracellular matrix. Interacts with PTPRB; this promotes endothelial cell-cell adhesion. Interacts with DOK2, GRB2, GRB7, GRB14, PIK3R1 and PTPN11/SHP2. Colocalizes with DOK2 at contacts with the extracellular matrix in migrating cells. Interacts (tyrosine phosphorylated) with TNIP2. Interacts (tyrosine phosphorylated) with SHC1 (via SH2 domain). In terms of processing, proteolytic processing leads to the shedding of the extracellular domain (soluble TIE-2 alias sTIE-2). Post-translationally, autophosphorylated on tyrosine residues in response to ligand binding. Autophosphorylation occurs in trans, i.e. one subunit of the dimeric receptor phosphorylates tyrosine residues on the other subunit. Autophosphorylation occurs in a sequential manner, where Tyr-992 in the kinase activation loop is phosphorylated first, followed by autophosphorylation at Tyr-1108 and at additional tyrosine residues. ANGPT1-induced phosphorylation is impaired during hypoxia, due to increased expression of ANGPT2. Phosphorylation is important for interaction with GRB14, PIK3R1 and PTPN11. Phosphorylation at Tyr-1102 is important for interaction with SHC1, GRB2 and GRB7. Phosphorylation at Tyr-1108 is important for interaction with DOK2 and for coupling to downstream signal transduction pathways in endothelial cells. Dephosphorylated by PTPRB. Ubiquitinated. The phosphorylated receptor is ubiquitinated and internalized, leading to its degradation. Detected in umbilical vein endothelial cells. Proteolytic processing gives rise to a soluble extracellular domain that is detected in blood plasma (at protein level). Predominantly expressed in endothelial cells and their progenitors, the angioblasts. Has been directly found in placenta and lung, with a lower level in umbilical vein endothelial cells, brain and kidney.

The protein localises to the cell membrane. It localises to the cell junction. It is found in the focal adhesion. The protein resides in the cytoplasm. Its subcellular location is the cytoskeleton. The protein localises to the secreted. It catalyses the reaction L-tyrosyl-[protein] + ATP = O-phospho-L-tyrosyl-[protein] + ADP + H(+). Its activity is regulated as follows. Angiopoietin binding leads to receptor dimerization and activation by autophosphorylation at Tyr-992 on the kinase activation loop. Inhibited by staurosporine, K252a, PP2, damnacanthal, SB203580, CEP-11207, CEP-11981 and CE-245677. Inhibited by triazine, thienopyrimidine and thiazolopyrimidine derivatives. Tyrosine-protein kinase that acts as a cell-surface receptor for ANGPT1, ANGPT2 and ANGPT4 and regulates angiogenesis, endothelial cell survival, proliferation, migration, adhesion and cell spreading, reorganization of the actin cytoskeleton, but also maintenance of vascular quiescence. Has anti-inflammatory effects by preventing the leakage of pro-inflammatory plasma proteins and leukocytes from blood vessels. Required for normal angiogenesis and heart development during embryogenesis. Required for post-natal hematopoiesis. After birth, activates or inhibits angiogenesis, depending on the context. Inhibits angiogenesis and promotes vascular stability in quiescent vessels, where endothelial cells have tight contacts. In quiescent vessels, ANGPT1 oligomers recruit TEK to cell-cell contacts, forming complexes with TEK molecules from adjoining cells, and this leads to preferential activation of phosphatidylinositol 3-kinase and the AKT1 signaling cascades. In migrating endothelial cells that lack cell-cell adhesions, ANGT1 recruits TEK to contacts with the extracellular matrix, leading to the formation of focal adhesion complexes, activation of PTK2/FAK and of the downstream kinases MAPK1/ERK2 and MAPK3/ERK1, and ultimately to the stimulation of sprouting angiogenesis. ANGPT1 signaling triggers receptor dimerization and autophosphorylation at specific tyrosine residues that then serve as binding sites for scaffold proteins and effectors. Signaling is modulated by ANGPT2 that has lower affinity for TEK, can promote TEK autophosphorylation in the absence of ANGPT1, but inhibits ANGPT1-mediated signaling by competing for the same binding site. Signaling is also modulated by formation of heterodimers with TIE1, and by proteolytic processing that gives rise to a soluble TEK extracellular domain. The soluble extracellular domain modulates signaling by functioning as decoy receptor for angiopoietins. TEK phosphorylates DOK2, GRB7, GRB14, PIK3R1; SHC1 and TIE1. The sequence is that of Angiopoietin-1 receptor from Homo sapiens (Human).